Consider the following 313-residue polypeptide: Putative glycosyltransferase ORF313 (313 aa).

This sequence belongs to the glycosyltransferase group 1 family. Glycosyltransferase 4 subfamily.

The protein is Putative glycosyltransferase ORF313 of Acidianus hospitalis (AFV-1).